The following is a 421-amino-acid chain: O-acetyl-L-homoserine sulfhydrylase 1 (421 aa).

N6-(pyridoxal phosphate)lysine is present on K206.

The protein belongs to the trans-sulfuration enzymes family. As to quaternary structure, homotetramer. Requires pyridoxal 5'-phosphate as cofactor.

It carries out the reaction O-acetyl-L-homoserine + hydrogen sulfide = L-homocysteine + acetate. Its pathway is amino-acid biosynthesis; L-methionine biosynthesis via de novo pathway; L-homocysteine from O-acetyl-L-homoserine: step 1/1. Its activity is regulated as follows. Inhibited by the carbonyl reagents hydroxylamine and phenylhydrazine. Also inhibited by methionine and propargylglycine. Its function is as follows. Catalyzes the conversion of O-acetyl-L-homoserine (OAH) into homocysteine in the methionine biosynthesis pathway. Has weak activity with O-acetyl-L-serine, O-phospho-L-serine, L-serine, O-succinyl-L-homoserine and L-homoserine. Shows low CTT beta-lyase activity and very low CTT gamma-synthase activity. The polypeptide is O-acetyl-L-homoserine sulfhydrylase 1 (Thermus thermophilus (strain ATCC 27634 / DSM 579 / HB8)).